Consider the following 224-residue polypeptide: UPF0758 protein PLES_57141 (224 aa).

The MPN domain maps to 102-224 (ILESPQAVRD…PLSLAEYGWL (123 aa)). The Zn(2+) site is built by His-173, His-175, and Asp-186. The JAMM motif motif lies at 173-186 (HNHPSGDARPSLAD).

This sequence belongs to the UPF0758 family.

This is UPF0758 protein PLES_57141 from Pseudomonas aeruginosa (strain LESB58).